Here is an 88-residue protein sequence, read N- to C-terminus: Small ribosomal subunit protein uS19 (88 aa).

Belongs to the universal ribosomal protein uS19 family.

Functionally, protein S19 forms a complex with S13 that binds strongly to the 16S ribosomal RNA. The chain is Small ribosomal subunit protein uS19 (rpsS) from Chlamydia pneumoniae (Chlamydophila pneumoniae).